A 115-amino-acid chain; its full sequence is Large ribosomal subunit protein bL20 (115 aa).

The protein belongs to the bacterial ribosomal protein bL20 family.

In terms of biological role, binds directly to 23S ribosomal RNA and is necessary for the in vitro assembly process of the 50S ribosomal subunit. It is not involved in the protein synthesizing functions of that subunit. The protein is Large ribosomal subunit protein bL20 of Chlorobium phaeovibrioides (strain DSM 265 / 1930) (Prosthecochloris vibrioformis (strain DSM 265)).